Here is a 101-residue protein sequence, read N- to C-terminus: Aspartyl/glutamyl-tRNA(Asn/Gln) amidotransferase subunit C (101 aa).

This sequence belongs to the GatC family. In terms of assembly, heterotrimer of A, B and C subunits.

It carries out the reaction L-glutamyl-tRNA(Gln) + L-glutamine + ATP + H2O = L-glutaminyl-tRNA(Gln) + L-glutamate + ADP + phosphate + H(+). It catalyses the reaction L-aspartyl-tRNA(Asn) + L-glutamine + ATP + H2O = L-asparaginyl-tRNA(Asn) + L-glutamate + ADP + phosphate + 2 H(+). Its function is as follows. Allows the formation of correctly charged Asn-tRNA(Asn) or Gln-tRNA(Gln) through the transamidation of misacylated Asp-tRNA(Asn) or Glu-tRNA(Gln) in organisms which lack either or both of asparaginyl-tRNA or glutaminyl-tRNA synthetases. The reaction takes place in the presence of glutamine and ATP through an activated phospho-Asp-tRNA(Asn) or phospho-Glu-tRNA(Gln). The sequence is that of Aspartyl/glutamyl-tRNA(Asn/Gln) amidotransferase subunit C from Enterococcus faecalis (strain ATCC 700802 / V583).